A 181-amino-acid polypeptide reads, in one-letter code: MKQLLDFLPLIIFFAVYKFFDIYIASGALIAATALQLVVTYALYKKLEKMHLITFAMVTVFGTLTLVFHDDAFIKWKVTIIYALFALALGVSQLLNKSILKSMLGKEMKVADKIWAHVTWYWVSFFAICGLVNIYVAFKLPLETWVNFKVFGLTALTLINTVITVFYLYKHLPEDQRKELK.

The next 5 membrane-spanning stretches (helical) occupy residues 10–30 (LIIFFAVYKFFDIYIASGALI), 50–70 (MHLITFAMVTVFGTLTLVFHD), 72–92 (AFIKWKVTIIYALFALALGVS), 118–138 (VTWYWVSFFAICGLVNIYVAF), and 148–168 (FKVFGLTALTLINTVITVFYL).

Belongs to the YciB family.

The protein localises to the cell inner membrane. In terms of biological role, plays a role in cell envelope biogenesis, maintenance of cell envelope integrity and membrane homeostasis. In Shewanella sp. (strain MR-4), this protein is Inner membrane-spanning protein YciB.